Here is a 136-residue protein sequence, read N- to C-terminus: Ribonuclease P protein component (136 aa).

Residues 39 to 59 (LPDVSSSKPARDTGAEQTSAP) form a disordered region.

This sequence belongs to the RnpA family. As to quaternary structure, consists of a catalytic RNA component (M1 or rnpB) and a protein subunit.

The enzyme catalyses Endonucleolytic cleavage of RNA, removing 5'-extranucleotides from tRNA precursor.. RNaseP catalyzes the removal of the 5'-leader sequence from pre-tRNA to produce the mature 5'-terminus. It can also cleave other RNA substrates such as 4.5S RNA. The protein component plays an auxiliary but essential role in vivo by binding to the 5'-leader sequence and broadening the substrate specificity of the ribozyme. The chain is Ribonuclease P protein component from Salinispora tropica (strain ATCC BAA-916 / DSM 44818 / JCM 13857 / NBRC 105044 / CNB-440).